The chain runs to 117 residues: MDWTWRVFCLLAVAPGAHSQVQLVQSGAEVKKPGASVKVSCKASGYTFTSYYMHWVRQAPGQGLEWMGIINPSGGSTSYAQKFQGRVTMTRDTSTSTVYMELSSLRSEDTAVYYCAR.

The first 19 residues, 1-19 (MDWTWRVFCLLAVAPGAHS), serve as a signal peptide directing secretion. The segment at 20–44 (QVQLVQSGAEVKKPGASVKVSCKAS) is framework-1. An Ig-like domain is found at 20-117 (QVQLVQSGAE…EDTAVYYCAR (98 aa)). The cysteines at positions 41 and 115 are disulfide-linked. The tract at residues 45 to 52 (GYTFTSYY) is complementarity-determining-1. A framework-2 region spans residues 53–69 (MHWVRQAPGQGLEWMGI). Positions 70-77 (INPSGGST) are complementarity-determining-2. The segment at 78-115 (SYAQKFQGRVTMTRDTSTSTVYMELSSLRSEDTAVYYC) is framework-3. The tract at residues 116-117 (AR) is complementarity-determining-3.

As to quaternary structure, immunoglobulins are composed of two identical heavy chains and two identical light chains; disulfide-linked.

It localises to the secreted. The protein resides in the cell membrane. Functionally, v region of the variable domain of immunoglobulin heavy chains that participates in the antigen recognition. Immunoglobulins, also known as antibodies, are membrane-bound or secreted glycoproteins produced by B lymphocytes. In the recognition phase of humoral immunity, the membrane-bound immunoglobulins serve as receptors which, upon binding of a specific antigen, trigger the clonal expansion and differentiation of B lymphocytes into immunoglobulins-secreting plasma cells. Secreted immunoglobulins mediate the effector phase of humoral immunity, which results in the elimination of bound antigens. The antigen binding site is formed by the variable domain of one heavy chain, together with that of its associated light chain. Thus, each immunoglobulin has two antigen binding sites with remarkable affinity for a particular antigen. The variable domains are assembled by a process called V-(D)-J rearrangement and can then be subjected to somatic hypermutations which, after exposure to antigen and selection, allow affinity maturation for a particular antigen. The protein is Immunoglobulin heavy variable 1-46 of Homo sapiens (Human).